The primary structure comprises 219 residues: Ribose-5-phosphate isomerase A (219 aa).

Substrate-binding positions include 28 to 31, 81 to 84, and 94 to 97; these read SGST, DGAD, and KGGG. The active-site Proton acceptor is Glu-103. Substrate is bound at residue Lys-121.

Belongs to the ribose 5-phosphate isomerase family. As to quaternary structure, homodimer.

It carries out the reaction aldehydo-D-ribose 5-phosphate = D-ribulose 5-phosphate. It participates in carbohydrate degradation; pentose phosphate pathway; D-ribose 5-phosphate from D-ribulose 5-phosphate (non-oxidative stage): step 1/1. In terms of biological role, catalyzes the reversible conversion of ribose-5-phosphate to ribulose 5-phosphate. The sequence is that of Ribose-5-phosphate isomerase A from Haemophilus influenzae (strain ATCC 51907 / DSM 11121 / KW20 / Rd).